Here is a 184-residue protein sequence, read N- to C-terminus: MARLEVPRPATFVTLTGFMGVGKSRIGRELARALMLHFIDLDRYIERRTGISIPDIFRHLGEEAFRRMEKEAVRELVGKDYLVLSLGGGTFMDPESQKALLGRGPVVALWASPETILERAMRKPGERPLLQVENPLERIRTLLEARAPIYRKAHIHVSTDGRRVEEVVEEIVEKLWRHAEARGA.

20–25 contributes to the ATP binding site; sequence GVGKSR. Position 24 (Ser24) interacts with Mg(2+). Substrate contacts are provided by Asp42, Arg66, and Gly88. Position 127 (Arg127) interacts with ATP. Substrate is bound at residue Arg146. Position 162 (Arg162) interacts with ATP.

The protein belongs to the shikimate kinase family. As to quaternary structure, monomer. The cofactor is Mg(2+).

It is found in the cytoplasm. It carries out the reaction shikimate + ATP = 3-phosphoshikimate + ADP + H(+). It functions in the pathway metabolic intermediate biosynthesis; chorismate biosynthesis; chorismate from D-erythrose 4-phosphate and phosphoenolpyruvate: step 5/7. In terms of biological role, catalyzes the specific phosphorylation of the 3-hydroxyl group of shikimic acid using ATP as a cosubstrate. The protein is Shikimate kinase of Thermus thermophilus (strain ATCC BAA-163 / DSM 7039 / HB27).